Consider the following 60-residue polypeptide: Single-pass membrane and coiled-coil domain-containing protein 4 homolog (60 aa).

The segment at 1–22 is disordered; it reads MRKLRGGQTRETRKQKQERREE. The span at 8–22 shows a compositional bias: basic and acidic residues; the sequence is QTRETRKQKQERREE. The stretch at 8-34 forms a coiled coil; that stretch reads QTRETRKQKQERREENQKIQQQLKTIV. A helical membrane pass occupies residues 30–50; sequence LKTIVLPICGVVFLCIVAYVF.

The protein belongs to the SMCO4 family.

The protein localises to the membrane. This is Single-pass membrane and coiled-coil domain-containing protein 4 homolog from Culex quinquefasciatus (Southern house mosquito).